The sequence spans 433 residues: Myricetin 3-O-glucosyl 1,2-rhamnoside 6'-O-caffeoyltransferase AT1 (433 aa).

Catalysis depends on proton acceptor residues histidine 157 and aspartate 375.

This sequence belongs to the plant acyltransferase family. Expressed in young cromes.

It carries out the reaction myricetin 3-O-[beta-D-glucosyl-(1-&gt;2)-alpha-L-rhamnoside] + (E)-caffeoyl-CoA = myricetin 3-O-[(6-O-(E)-caffeoyl-beta-D-glucosyl)-(1-&gt;2)-alpha-L-rhamnoside] + CoA. It functions in the pathway flavonoid metabolism. Caffeoyltransferase involved in montbretin A (MbA) biosynthesis. Catalyzes the caffeoylation of myricetin 3-O-beta-D-glucosyl 1,2-alpha-L-rhamnoside (MRG) to produce myricetin 3-O-(6'-O-caffeoyl)-beta-D-glucosyl 1,2-alpha-L-rhamnoside (mini-MbA), a precursor of MbA. Mini-MbA and MbA are potent inhibitors of human pancreatic alpha-amylase and are being developed as drug candidates to treat type-2 diabetes. In vitro, is able to catalyze the caffeoylation of quercetin 3-O-sophoroside (QGG), although QGG may not be a physiological substrate in vivo. In vitro, can use coumaryl-CoA, feruloyl-CoA and acetyl-CoA, although these three acyl donors may not be physiological in vivo. The protein is Myricetin 3-O-glucosyl 1,2-rhamnoside 6'-O-caffeoyltransferase AT1 of Crocosmia x crocosmiiflora (Montbretia).